The following is a 220-amino-acid chain: Uracil-DNA glycosylase (220 aa).

Aspartate 65 (proton acceptor) is an active-site residue.

The protein belongs to the uracil-DNA glycosylase (UDG) superfamily. UNG family.

It is found in the cytoplasm. It catalyses the reaction Hydrolyzes single-stranded DNA or mismatched double-stranded DNA and polynucleotides, releasing free uracil.. In terms of biological role, excises uracil residues from the DNA which can arise as a result of misincorporation of dUMP residues by DNA polymerase or due to deamination of cytosine. The chain is Uracil-DNA glycosylase from Amoebophilus asiaticus (strain 5a2).